The sequence spans 200 residues: Pyridoxal 5'-phosphate synthase subunit PdxT (200 aa).

G52–S54 lines the L-glutamine pocket. C84 serves as the catalytic Nucleophile. Residues R116 and I145–R146 contribute to the L-glutamine site. Residues H181 and E183 each act as charge relay system in the active site.

It belongs to the glutaminase PdxT/SNO family. As to quaternary structure, in the presence of PdxS, forms a dodecamer of heterodimers. Only shows activity in the heterodimer.

The enzyme catalyses aldehydo-D-ribose 5-phosphate + D-glyceraldehyde 3-phosphate + L-glutamine = pyridoxal 5'-phosphate + L-glutamate + phosphate + 3 H2O + H(+). It carries out the reaction L-glutamine + H2O = L-glutamate + NH4(+). Its pathway is cofactor biosynthesis; pyridoxal 5'-phosphate biosynthesis. In terms of biological role, catalyzes the hydrolysis of glutamine to glutamate and ammonia as part of the biosynthesis of pyridoxal 5'-phosphate. The resulting ammonia molecule is channeled to the active site of PdxS. The sequence is that of Pyridoxal 5'-phosphate synthase subunit PdxT from Sulfolobus acidocaldarius (strain ATCC 33909 / DSM 639 / JCM 8929 / NBRC 15157 / NCIMB 11770).